A 141-amino-acid chain; its full sequence is Ribonuclease P protein component (141 aa).

Disordered stretches follow at residues 37-56 (RTEE…VGFT) and 114-141 (RRIT…VNGK). Over residues 114–123 (RRITAKGERR) the composition is skewed to basic and acidic residues.

Belongs to the RnpA family. As to quaternary structure, consists of a catalytic RNA component (M1 or rnpB) and a protein subunit.

The enzyme catalyses Endonucleolytic cleavage of RNA, removing 5'-extranucleotides from tRNA precursor.. RNaseP catalyzes the removal of the 5'-leader sequence from pre-tRNA to produce the mature 5'-terminus. It can also cleave other RNA substrates such as 4.5S RNA. The protein component plays an auxiliary but essential role in vivo by binding to the 5'-leader sequence and broadening the substrate specificity of the ribozyme. This is Ribonuclease P protein component from Brucella suis biovar 1 (strain 1330).